The following is a 362-amino-acid chain: E3 ubiquitin-protein ligase TM129 (362 aa).

Residues 1-6 (MESPAV) are Lumenal-facing. Residues 7-27 (TFTLAYVVFSVCFVFTPNEFH) form a helical membrane-spanning segment. Topologically, residues 28–56 (SAGITVQNLLSGWLGSEDVAFVHYHIRRS) are cytoplasmic. The chain crosses the membrane as a helical span at residues 57–77 (SATLLAHSLLPMGYFIGMCFA). The Lumenal segment spans residues 78 to 94 (APEKELYNVHKAADGWK). A helical transmembrane segment spans residues 95–115 (VFVLMAVLLPIATSILAFYWS). Residues 116–362 (QKRWSNHPLA…FCIVDVCIVR (247 aa)) lie on the Cytoplasmic side of the membrane. The segment at 285-350 (CIGCMQTNAN…SSQVPCPTCR (66 aa)) adopts an RING-type; degenerate zinc-finger fold.

This sequence belongs to the TMEM129 family. In terms of assembly, integral component of ER-resident dislocation complexes.

The protein localises to the endoplasmic reticulum membrane. The enzyme catalyses S-ubiquitinyl-[E2 ubiquitin-conjugating enzyme]-L-cysteine + [acceptor protein]-L-lysine = [E2 ubiquitin-conjugating enzyme]-L-cysteine + N(6)-ubiquitinyl-[acceptor protein]-L-lysine.. It functions in the pathway protein modification; protein ubiquitination. In terms of biological role, E3 ubiquitin-protein ligase involved in ER-associated protein degradation, preferentially associates with the E2 enzyme UBE2J2. The protein is E3 ubiquitin-protein ligase TM129 (tmem129) of Xenopus laevis (African clawed frog).